The following is a 296-amino-acid chain: 4-diphosphocytidyl-2-C-methyl-D-erythritol kinase (296 aa).

Lys12 is a catalytic residue. Residue 94–104 coordinates ATP; it reads PAQAGMGGGSS. The active site involves Asp136.

This sequence belongs to the GHMP kinase family. IspE subfamily.

It carries out the reaction 4-CDP-2-C-methyl-D-erythritol + ATP = 4-CDP-2-C-methyl-D-erythritol 2-phosphate + ADP + H(+). Its pathway is isoprenoid biosynthesis; isopentenyl diphosphate biosynthesis via DXP pathway; isopentenyl diphosphate from 1-deoxy-D-xylulose 5-phosphate: step 3/6. Functionally, catalyzes the phosphorylation of the position 2 hydroxy group of 4-diphosphocytidyl-2C-methyl-D-erythritol. This Variovorax paradoxus (strain S110) protein is 4-diphosphocytidyl-2-C-methyl-D-erythritol kinase.